Reading from the N-terminus, the 396-residue chain is Elongation factor Tu (396 aa).

The tr-type G domain maps to 10 to 206 (KPHVNVGTIG…ALDSYIPEPE (197 aa)). Positions 19–26 (GHVDHGKT) are G1. 19–26 (GHVDHGKT) is a binding site for GTP. A Mg(2+)-binding site is contributed by Thr-26. The tract at residues 60–64 (GITIN) is G2. The tract at residues 81-84 (DCPG) is G3. Residues 81–85 (DCPGH) and 136–139 (NKAD) contribute to the GTP site. Residues 136–139 (NKAD) are G4. The segment at 174–176 (SAL) is G5.

The protein belongs to the TRAFAC class translation factor GTPase superfamily. Classic translation factor GTPase family. EF-Tu/EF-1A subfamily. Monomer.

The protein localises to the cytoplasm. It catalyses the reaction GTP + H2O = GDP + phosphate + H(+). Its function is as follows. GTP hydrolase that promotes the GTP-dependent binding of aminoacyl-tRNA to the A-site of ribosomes during protein biosynthesis. The sequence is that of Elongation factor Tu from Nitrosomonas europaea (strain ATCC 19718 / CIP 103999 / KCTC 2705 / NBRC 14298).